A 208-amino-acid polypeptide reads, in one-letter code: Thymidylate kinase (208 aa).

Residue 10–17 (GPEGSGKT) coordinates ATP.

This sequence belongs to the thymidylate kinase family.

The catalysed reaction is dTMP + ATP = dTDP + ADP. Its function is as follows. Phosphorylation of dTMP to form dTDP in both de novo and salvage pathways of dTTP synthesis. This chain is Thymidylate kinase, found in Bacillus cereus (strain ATCC 10987 / NRS 248).